The primary structure comprises 113 residues: Hydrogenase maturation factor HypA (113 aa).

His2 is a Ni(2+) binding site. 4 residues coordinate Zn(2+): Cys70, Cys73, Cys86, and Cys88.

It belongs to the HypA/HybF family.

In terms of biological role, involved in the maturation of [NiFe] hydrogenases. Required for nickel insertion into the metal center of the hydrogenase. The sequence is that of Hydrogenase maturation factor HypA from Trichormus variabilis (strain ATCC 29413 / PCC 7937) (Anabaena variabilis).